Reading from the N-terminus, the 296-residue chain is Urease operon transcriptional activator (296 aa).

One can recognise an HTH araC/xylS-type domain in the interval Q171 to Q268. 2 consecutive DNA-binding regions (H-T-H motif) follow at residues D188 to G209 and V235 to Y258.

Positive regulator of the expression of the urease operon. This Escherichia coli protein is Urease operon transcriptional activator (ureR).